A 314-amino-acid chain; its full sequence is Homoserine kinase (314 aa).

96–106 (PIGSGLGSSAC) is an ATP binding site.

The protein belongs to the GHMP kinase family. Homoserine kinase subfamily.

It is found in the cytoplasm. It catalyses the reaction L-homoserine + ATP = O-phospho-L-homoserine + ADP + H(+). It functions in the pathway amino-acid biosynthesis; L-threonine biosynthesis; L-threonine from L-aspartate: step 4/5. In terms of biological role, catalyzes the ATP-dependent phosphorylation of L-homoserine to L-homoserine phosphate. In Mannheimia succiniciproducens (strain KCTC 0769BP / MBEL55E), this protein is Homoserine kinase.